Consider the following 132-residue polypeptide: Pro-MCH 1 (132 aa).

A signal peptide spans 1–24 (MRHYVLSISFAVALFLECYTPSTA). Cys-120 and Cys-129 are disulfide-bonded.

Belongs to the melanin-concentrating hormone family. As to expression, pituitary gland. Produced in neurons of lateral basal hypothalamus which project both to the brain and to the neural lobe of the pituitary gland from where MCH is released.

Plays a role in skin pigmentation by antagonizing the action of melanotropin alpha. Induces melanin concentration within the melanophores. May participate in the control of the hypothalamo-pituitary adrenal gland axis by inhibiting the release of ACTH. This chain is Pro-MCH 1 (mch1), found in Oncorhynchus keta (Chum salmon).